A 521-amino-acid polypeptide reads, in one-letter code: MKKLFLVIVPLLLSLLATSCSTSNVPPPTPLAEKPPKEAKVKVKWSRKTGNGNGGLPIYNVSPTYANNTVFVPNQNGVAYGLSITDGKIVWKHDTGTILSSQPNTIANAVIFGSVKGVLTAVDQKDGKILWRTDAPSSIFSQPTIYSNHLYTHTHDGSVTSFDATNGSKVWNVTNNIPEITLPSDSSPIILNDTVMVGSAFGTVLGFTLESGDRTINLPVAIAHGSSPADKMVDITANPMLYGNYLIFAAFQGAIVALDKDTGKMLWAKKASIINNMAINNGVIFTAQANSELKAYDIQTGDTVWTQSTLEWRKITAPIYYKGLIVVADYQGFLHFFNSLNGDYLGRYKLTPKSDFFDYGISGQLVPTEKGILIEADSGTTYLVDAHSDRVIYENILGDYKVNRGKNVKFIYPLEQPKSGSIESSPKALPDKKVDSNKTSKNDTDSNPATTATSTKDIQNPANQEMINSTPVSNTSTKAEKNENTDSSIAEGVVTSNKVQPTPKGKNATIIIGDFSKGDSD.

The first 19 residues, 1-19 (MKKLFLVIVPLLLSLLATS), serve as a signal peptide directing secretion. Cys-20 carries N-palmitoyl cysteine lipidation. The S-diacylglycerol cysteine moiety is linked to residue Cys-20. A disordered region spans residues 418–521 (KSGSIESSPK…IGDFSKGDSD (104 aa)). Over residues 429–444 (LPDKKVDSNKTSKNDT) the composition is skewed to basic and acidic residues. The segment covering 445–477 (DSNPATTATSTKDIQNPANQEMINSTPVSNTST) has biased composition (polar residues).

It belongs to the BamB family. As to quaternary structure, part of the Bam complex.

It localises to the cell outer membrane. Functionally, part of the outer membrane protein assembly complex, which is involved in assembly and insertion of beta-barrel proteins into the outer membrane. The chain is Outer membrane protein assembly factor BamB from Francisella salina.